The following is a 553-amino-acid chain: Zinc finger protein 426 (553 aa).

Positions 40–111 (VSFDDVIVDF…KIVFPEWKIQ (72 aa)) constitute a KRAB domain. 11 C2H2-type zinc fingers span residues 222–244 (FECS…QRTH), 277–299 (HRCK…MRTH), 305–327 (YECK…GRTH), 333–355 (YVCN…VRSH), 361–383 (YACK…IRTH), 389–411 (FVCV…LKMH), 417–439 (CECK…MRTH), 445–467 (YTCK…MRIH), 473–495 (YECK…ERTH), 501–525 (YECK…SHTH), and 531–553 (YKCQ…ERIH).

The protein localises to the nucleus. In terms of biological role, may be involved in transcriptional regulation. In Rattus norvegicus (Rat), this protein is Zinc finger protein 426 (Znf426).